The primary structure comprises 120 residues: NAD(P)H-quinone oxidoreductase subunit 3, chloroplastic (120 aa).

The next 3 membrane-spanning stretches (helical) occupy residues 9-29 (IFWAFLIIASLIPILAFWISA), 64-84 (MFALVFVVFDVETVFLYPWAM), and 88-108 (VLGISVFIEAFIFVLILVVGL).

The protein belongs to the complex I subunit 3 family. NDH is composed of at least 16 different subunits, 5 of which are encoded in the nucleus.

It localises to the plastid. It is found in the chloroplast thylakoid membrane. It carries out the reaction a plastoquinone + NADH + (n+1) H(+)(in) = a plastoquinol + NAD(+) + n H(+)(out). It catalyses the reaction a plastoquinone + NADPH + (n+1) H(+)(in) = a plastoquinol + NADP(+) + n H(+)(out). In terms of biological role, NDH shuttles electrons from NAD(P)H:plastoquinone, via FMN and iron-sulfur (Fe-S) centers, to quinones in the photosynthetic chain and possibly in a chloroplast respiratory chain. The immediate electron acceptor for the enzyme in this species is believed to be plastoquinone. Couples the redox reaction to proton translocation, and thus conserves the redox energy in a proton gradient. This Oryza nivara (Indian wild rice) protein is NAD(P)H-quinone oxidoreductase subunit 3, chloroplastic.